The following is a 733-amino-acid chain: Forkhead box protein K1 (733 aa).

Residue Ala2 is modified to N-acetylalanine. The tract at residues 2 to 40 (AEVGEDSGARALLALRSAPCSPVLCAAAAAAAFPAAAPP) is interaction with SIN3A and SIN3B. Residues 36–79 (AAAPPPAPAQPQPPPGPPPPPPPPLPPGAIAGAGSSGGSSGVSG) form a disordered region. Pro residues predominate over residues 37-62 (AAPPPAPAQPQPPPGPPPPPPPPLPP). The tract at residues 95–420 (AASVRQSPGP…PLSSRSAPAS (326 aa)) is required for interaction with FOXO4 and MEF2C. Ser101 carries the phosphoserine modification. In terms of domain architecture, FHA spans 123–175 (VTIGRNSSQGSVDLSMGLSSFISRRHLQLSFQEPHFYLRCLGKNGVFVDGAFQ). An omega-N-methylarginine mark is found at Arg161 and Arg191. 4 positions are modified to phosphoserine: Ser213, Ser223, Ser239, and Ser243. Phosphothreonine is present on residues Thr245 and Thr247. Phosphoserine is present on residues Ser253, Ser257, Ser295, and Ser299. Disordered stretches follow at residues 287–306 (ASEQQADTSGGDSPKDESKP) and 413–436 (SSRSAPASPTHPGLMSPRSGGLQT). The fork-head DNA-binding region spans 305 to 400 (KPPFSYAQLI…EQAFRKRRQR (96 aa)). Phosphoserine occurs at positions 416 and 420. The residue at position 422 (Thr422) is a Phosphothreonine. Phosphoserine is present on Ser428. At Thr436 the chain carries Phosphothreonine. Ser441, Ser445, and Ser459 each carry phosphoserine. The segment covering 676 to 697 (VAATATTTPATATTASASASST) has biased composition (low complexity). A disordered region spans residues 676–733 (VAATATTTPATATTASASASSTGEPEVKRSRVEEPSGAVTTPAGVIAAAGPQGPGTGE). Residues 700–709 (PEVKRSRVEE) show a composition bias toward basic and acidic residues.

Interacts with SIN3A and SIN3B (via PAH2) to form a complex which represses transcription. Component of SIN3A-, but not SIN3B-, containing multiprotein complexes. Interacts with FOXO4 and MEF2C; both interactions inhibit FOXO4 and MEF2C transactivation activity. Interacts (when phosphorylated) with YWHAE/14-3-3-epsilon; promotes sequestration in the cytoplasm and leads to impaired ability to bind DNA. Interacts with FHL2. Interacts with SRF. Interacts with DVL2 and DVL3; the interaction induces DVL2 nuclear translocation. Interacts with BAP1 (when phosphorylated). Accessory component of the polycomb repressive deubiquitinase (PR-DUB) complex, at least composed of BAP1, one of ASXL1, ASXL2 or (probably) ASXL3 and one of MBD5 or MBD6. The PR-DUB core associates with a number of accessory proteins, including FOXK1, FOXK2, KDM1B, HCFC1 and OGT. Phosphorylation by GSK3 (GSK3A or GSK3B) promotes interaction with YWHAE/14-3-3-epsilon and retention in the cytoplasm. In response to mTORC1 signaling, phosphorylation by GSK3 is prevented, leading to translocation to the nucleus. In terms of tissue distribution, expressed both developing and adult tissues. In adults, significant expression is seen in tumors of the brain, colon and lymph node.

It is found in the nucleus. It localises to the cytoplasm. Its function is as follows. Transcriptional regulator involved in different processes such as glucose metabolism, aerobic glycolysis, muscle cell differentiation and autophagy. Recognizes and binds the forkhead DNA sequence motif (5'-GTAAACA-3') and can both act as a transcription activator or repressor, depending on the context. Together with FOXK2, acts as a key regulator of metabolic reprogramming towards aerobic glycolysis, a process in which glucose is converted to lactate in the presence of oxygen. Acts by promoting expression of enzymes for glycolysis (such as hexokinase-2 (HK2), phosphofructokinase, pyruvate kinase (PKLR) and lactate dehydrogenase), while suppressing further oxidation of pyruvate in the mitochondria by up-regulating pyruvate dehydrogenase kinases PDK1 and PDK4. Probably plays a role in gluconeogenesis during overnight fasting, when lactate from white adipose tissue and muscle is the main substrate. Involved in mTORC1-mediated metabolic reprogramming: in response to mTORC1 signaling, translocates into the nucleus and regulates the expression of genes associated with glycolysis and downstream anabolic pathways, such as HIF1A, thereby regulating glucose metabolism. Together with FOXK2, acts as a negative regulator of autophagy in skeletal muscle: in response to starvation, enters the nucleus, binds the promoters of autophagy genes and represses their expression, preventing proteolysis of skeletal muscle proteins. Acts as a transcriptional regulator of the myogenic progenitor cell population in skeletal muscle. Binds to the upstream enhancer region (CCAC box) of myoglobin (MB) gene, regulating the myogenic progenitor cell population. Promotes muscle progenitor cell proliferation by repressing the transcriptional activity of FOXO4, thereby inhibiting myogenic differentiation. Involved in remodeling processes of adult muscles that occur in response to physiological stimuli. Required to correct temporal orchestration of molecular and cellular events necessary for muscle repair. Represses myogenic differentiation by inhibiting MEFC activity. Positively regulates Wnt/beta-catenin signaling by translocating DVL into the nucleus. Reduces virus replication, probably by binding the interferon stimulated response element (ISRE) to promote antiviral gene expression. Accessory component of the polycomb repressive deubiquitinase (PR-DUB) complex; recruits the PR-DUB complex to specific FOXK1-bound genes. This is Forkhead box protein K1 from Homo sapiens (Human).